Reading from the N-terminus, the 399-residue chain is Forkhead box protein A4-A (399 aa).

Positions 119–213 (KPPYSYISLI…ENGCYLRRQK (95 aa)) form a DNA-binding region, fork-head. Residues 219-234 (RSKSGEGEKKVNKPGE) are compositionally biased toward basic and acidic residues. The tract at residues 219-290 (RSKSGEGEKK…VGLSPTSEQA (72 aa)) is disordered. Positions 267–277 (STGSSIHQACG) are enriched in polar residues.

During stages 8.5 to 10, expressed in the part of the dorsal mesoderm invaginating the dorsal blastopore lip (Spemann organizer), as a direct response to dorsal mesodermal induction. At stage 12 (mid-gastrulation), restricted to the dorsal midline in the deeper layers of mesodermal cells. Continuously present in the posterior portion of invaginated mesoderm and expressed within the notochord. Also present in the midline of the neural plate during gastrulation, but absent from the notoplate in exogastrula embryos. Expression in the notochord continues in neurula-stage embryos and at stage 20 in addition to the notochord, expression is seen in the pharyngeal endoderm.

The protein localises to the nucleus. Its function is as follows. Transcriptional repressor involved in embryonic nervous system development. Plays a role in the induction and patterning of the anterior-posterior neural axis. Involved in the establishment of floor plate differentiation from neural plate cells during gastrulation. Binds the anf1 promoter sequence to restrict expression of anf1 to the anterior of the neural plate, thereby patterning the forebrain. Can bind to the HNF-3-alpha DNA target sequence. Cooperates with t/bra in a dose-dependent manner to specify dorsal mesoderm formation, including notochord. Binds to DNA via the target sequence 5'-[GA]TAAA[TC]A-3', with 5'-GTAAATA-3' being the preferred binding site. This Xenopus laevis (African clawed frog) protein is Forkhead box protein A4-A (foxa4-a).